Here is a 306-residue protein sequence, read N- to C-terminus: UDP-N-acetylenolpyruvoylglucosamine reductase (306 aa).

An FAD-binding PCMH-type domain is found at 34–198 (VGGPADLLIT…LEVTFKLHNS (165 aa)). The active site involves arginine 177. The active-site Proton donor is the serine 227. Glutamate 297 is an active-site residue.

Belongs to the MurB family. The cofactor is FAD.

The protein resides in the cytoplasm. The enzyme catalyses UDP-N-acetyl-alpha-D-muramate + NADP(+) = UDP-N-acetyl-3-O-(1-carboxyvinyl)-alpha-D-glucosamine + NADPH + H(+). It functions in the pathway cell wall biogenesis; peptidoglycan biosynthesis. Its function is as follows. Cell wall formation. This is UDP-N-acetylenolpyruvoylglucosamine reductase from Clostridium botulinum (strain 657 / Type Ba4).